Consider the following 73-residue polypeptide: Mu-sparatoxin-Hv2 (73 aa).

Residues 1–20 form the signal peptide; the sequence is MKFAIVITLLLVAFSAVALA. The propeptide occupies 21 to 35; it reads DKSIERAVMDLITAR. Disulfide bonds link C39/C53, C46/C58, and C52/C68. F72 carries the phenylalanine amide modification.

This sequence belongs to the neurotoxin 10 (Hwtx-1) family. In terms of tissue distribution, expressed by the venom gland.

The protein localises to the secreted. Insecticidal toxin that potently and irreversibly blocks voltage-gated sodium channels (Nav) in cockroach dorsal unpaired median (DUM) neurons (IC(50)=833.7 nM). It does not change both the steady-state activation and inactivation curves, suggesting it acts as a pore blocker (possibly at Nav site 1). Does not show toxicity when intraperitoneally injected into mouse. The chain is Mu-sparatoxin-Hv2 from Heteropoda venatoria (Brown huntsman spider).